A 329-amino-acid chain; its full sequence is DNA-directed RNA polymerase subunit alpha (329 aa).

An alpha N-terminal domain (alpha-NTD) region spans residues 1 to 235 (MQGSVTEFLK…EQLDAFVDLR (235 aa)). The alpha C-terminal domain (alpha-CTD) stretch occupies residues 249–329 (FDPILLRPVD…NWPPASIAED (81 aa)).

Belongs to the RNA polymerase alpha chain family. In terms of assembly, homodimer. The RNAP catalytic core consists of 2 alpha, 1 beta, 1 beta' and 1 omega subunit. When a sigma factor is associated with the core the holoenzyme is formed, which can initiate transcription.

The enzyme catalyses RNA(n) + a ribonucleoside 5'-triphosphate = RNA(n+1) + diphosphate. In terms of biological role, DNA-dependent RNA polymerase catalyzes the transcription of DNA into RNA using the four ribonucleoside triphosphates as substrates. The chain is DNA-directed RNA polymerase subunit alpha from Photobacterium profundum (strain SS9).